A 96-amino-acid chain; its full sequence is Protein Vpr (96 aa).

Positions 1–42 (MEQAPEDQGPQREPYNEWTLELLEELKSEAVRHFPRIWLHNL) are homooligomerization. A phosphoserine; by host mark is found at S79, S94, and S96.

It belongs to the HIV-1 VPR protein family. Homooligomer, may form homodimer. Interacts with p6-gag region of the Pr55 Gag precursor protein through a (Leu-X-X)4 motif near the C-terminus of the P6gag protein. Interacts with host UNG. May interact with host RAD23A/HHR23A. Interacts with host VPRBP/DCAF1, leading to hijack the CUL4A-RBX1-DDB1-DCAF1/VPRBP complex, mediating ubiquitination of host proteins such as TERT and ZGPAT and arrest of the cell cycle in G2 phase. In terms of processing, phosphorylated on several residues by host. These phosphorylations regulate VPR activity for the nuclear import of the HIV-1 pre-integration complex.

It is found in the virion. The protein localises to the host nucleus. It localises to the host extracellular space. Functionally, during virus replication, may deplete host UNG protein, and incude G2-M cell cycle arrest. Acts by targeting specific host proteins for degradation by the 26S proteasome, through association with the cellular CUL4A-DDB1 E3 ligase complex by direct interaction with host VPRPB/DCAF-1. Cell cycle arrest reportedly occurs within hours of infection and is not blocked by antiviral agents, suggesting that it is initiated by the VPR carried into the virion. Additionally, VPR induces apoptosis in a cell cycle dependent manner suggesting that these two effects are mechanistically linked. Detected in the serum and cerebrospinal fluid of AIDS patient, VPR may also induce cell death to bystander cells. In terms of biological role, during virus entry, plays a role in the transport of the viral pre-integration (PIC) complex to the host nucleus. This function is crucial for viral infection of non-dividing macrophages. May act directly at the nuclear pore complex, by binding nucleoporins phenylalanine-glycine (FG)-repeat regions. This is Protein Vpr from Homo sapiens (Human).